Consider the following 490-residue polypeptide: GTPase Der (490 aa).

EngA-type G domains are found at residues 3–166 (PVVA…MDDV) and 203–376 (IKLA…DSST). GTP is bound by residues 9–16 (GRPNVGKS), 56–60 (DTGGI), 118–121 (NKTD), 209–216 (GRPNVGKS), 256–260 (DTAGV), and 321–324 (NKWD). Residues 377–461 (RRVSTAMLTR…PIRIQFKEGE (85 aa)) form the KH-like domain.

It belongs to the TRAFAC class TrmE-Era-EngA-EngB-Septin-like GTPase superfamily. EngA (Der) GTPase family. In terms of assembly, associates with the 50S ribosomal subunit.

GTPase that plays an essential role in the late steps of ribosome biogenesis. This is GTPase Der from Salmonella newport (strain SL254).